The following is a 598-amino-acid chain: Elongation factor 4 (598 aa).

Positions 2 to 184 (KNIRNFSIIA…EIVRCIPPPV (183 aa)) constitute a tr-type G domain. GTP is bound by residues 14–19 (DHGKST) and 131–134 (NKID).

Belongs to the TRAFAC class translation factor GTPase superfamily. Classic translation factor GTPase family. LepA subfamily.

It localises to the cell inner membrane. It catalyses the reaction GTP + H2O = GDP + phosphate + H(+). Functionally, required for accurate and efficient protein synthesis under certain stress conditions. May act as a fidelity factor of the translation reaction, by catalyzing a one-codon backward translocation of tRNAs on improperly translocated ribosomes. Back-translocation proceeds from a post-translocation (POST) complex to a pre-translocation (PRE) complex, thus giving elongation factor G a second chance to translocate the tRNAs correctly. Binds to ribosomes in a GTP-dependent manner. This chain is Elongation factor 4, found in Psychromonas ingrahamii (strain DSM 17664 / CCUG 51855 / 37).